The sequence spans 348 residues: F-box protein At2g20380 (348 aa).

One can recognise an F-box domain in the interval 14-60 (SPESNSLPNDLIVTILARLSQSYYPKLSLVSKTFRAILASPELYQTR).

In Arabidopsis thaliana (Mouse-ear cress), this protein is F-box protein At2g20380.